The sequence spans 181 residues: Peptidyl-tRNA hydrolase (181 aa).

Y14 contacts tRNA. The Proton acceptor role is filled by H19. The tRNA site is built by Y62, N64, and N108.

The protein belongs to the PTH family. In terms of assembly, monomer.

The protein resides in the cytoplasm. It carries out the reaction an N-acyl-L-alpha-aminoacyl-tRNA + H2O = an N-acyl-L-amino acid + a tRNA + H(+). Hydrolyzes ribosome-free peptidyl-tRNAs (with 1 or more amino acids incorporated), which drop off the ribosome during protein synthesis, or as a result of ribosome stalling. Its function is as follows. Catalyzes the release of premature peptidyl moieties from peptidyl-tRNA molecules trapped in stalled 50S ribosomal subunits, and thus maintains levels of free tRNAs and 50S ribosomes. The polypeptide is Peptidyl-tRNA hydrolase (Campylobacter jejuni subsp. jejuni serotype O:2 (strain ATCC 700819 / NCTC 11168)).